The sequence spans 43 residues: Bacteriocin mundticin (43 aa).

An intrachain disulfide couples Cys-9 to Cys-14.

In terms of biological role, this bacteriocin inhibits the growth of several Gram-positive bacteria, especially pathogenic L.monocytogenes and C.botulinum but has no effect on the growth of a number of yeasts and Gram-negative bacteria. The sequence is that of Bacteriocin mundticin from Enterococcus mundtii.